The sequence spans 447 residues: Chaperone protein dnaJ A7B, chloroplastic (447 aa).

The transit peptide at 1–86 (MALLQFGGTL…HRRSSRFIVR (86 aa)) directs the protein to the chloroplast. Residues 90–154 (DFYSTLGVSR…EKRSIYDKYG (65 aa)) form the J domain. The segment at 217–298 (GVEKEIEITR…CGGDGRVRKT (82 aa)) adopts a CR-type zinc-finger fold. Cysteine 230, cysteine 233, cysteine 247, cysteine 250, cysteine 273, cysteine 276, cysteine 286, and cysteine 289 together coordinate Zn(2+). CXXCXGXG motif repeat units lie at residues 230-237 (CNTCDGTG), 247-254 (CKTCGGQG), 273-280 (CNTCGGTG), and 286-293 (CNTCGGDG).

This sequence belongs to the DnaJ family. Interacts with PCNA. As to expression, expressed in roots, stems, leaves and panicles.

Its subcellular location is the plastid. It localises to the chloroplast. Plays pivotal roles in chloroplast development. Is essential for the regulation of chloroplast development and differentiation. This chain is Chaperone protein dnaJ A7B, chloroplastic, found in Oryza sativa subsp. japonica (Rice).